The primary structure comprises 77 residues: Translation initiation factor IF-1, chloroplastic (77 aa).

The S1-like domain maps to 1 to 71 (MKEQKLIHEG…TKGRIIYRLR (71 aa)).

Belongs to the IF-1 family. In terms of assembly, component of the 30S ribosomal translation pre-initiation complex which assembles on the 30S ribosome in the order IF-2 and IF-3, IF-1 and N-formylmethionyl-tRNA(fMet); mRNA recruitment can occur at any time during PIC assembly.

Its subcellular location is the plastid. The protein localises to the chloroplast. Functionally, one of the essential components for the initiation of protein synthesis. Stabilizes the binding of IF-2 and IF-3 on the 30S subunit to which N-formylmethionyl-tRNA(fMet) subsequently binds. Helps modulate mRNA selection, yielding the 30S pre-initiation complex (PIC). Upon addition of the 50S ribosomal subunit IF-1, IF-2 and IF-3 are released leaving the mature 70S translation initiation complex. This chain is Translation initiation factor IF-1, chloroplastic, found in Drimys granadensis.